Here is a 250-residue protein sequence, read N- to C-terminus: Small ribosomal subunit protein uS5 (250 aa).

The span at 1-22 (MNVVETSSEMNSNVEKASTPKQ) shows a compositional bias: polar residues. The disordered stretch occupies residues 1 to 40 (MNVVETSSEMNSNVEKASTPKQENNKRFERKSRPSSRQKV). The region spanning 45-108 (FEEKVVTIRR…KEAKKNLVSV (64 aa)) is the S5 DRBM domain.

It belongs to the universal ribosomal protein uS5 family. Part of the 30S ribosomal subunit. Contacts proteins S4 and S8.

Its function is as follows. With S4 and S12 plays an important role in translational accuracy. In terms of biological role, located at the back of the 30S subunit body where it stabilizes the conformation of the head with respect to the body. This chain is Small ribosomal subunit protein uS5, found in Mycoplasma capricolum subsp. capricolum (strain California kid / ATCC 27343 / NCTC 10154).